The chain runs to 412 residues: Phytoene synthase 1, chloroplastic (412 aa).

A chloroplast-targeting transit peptide spans 1-129 (MSVALLWVVS…AYDRCGEVCA (129 aa)).

This sequence belongs to the phytoene/squalene synthase family. Monomer. Interacts with SGR1.

It is found in the plastid. Its subcellular location is the chloroplast. The catalysed reaction is 2 (2E,6E,10E)-geranylgeranyl diphosphate = 15-cis-phytoene + 2 diphosphate. It participates in carotenoid biosynthesis; phytoene biosynthesis; all-trans-phytoene from geranylgeranyl diphosphate: step 1/1. Functionally, catalyzes the reaction from prephytoene diphosphate to phytoene. The chain is Phytoene synthase 1, chloroplastic (PSY1) from Solanum lycopersicum (Tomato).